We begin with the raw amino-acid sequence, 90 residues long: Probable Fe(2+)-trafficking protein (90 aa).

It belongs to the Fe(2+)-trafficking protein family. In terms of assembly, monomer.

Functionally, could be a mediator in iron transactions between iron acquisition and iron-requiring processes, such as synthesis and/or repair of Fe-S clusters in biosynthetic enzymes. The polypeptide is Probable Fe(2+)-trafficking protein (Sodalis glossinidius (strain morsitans)).